A 248-amino-acid polypeptide reads, in one-letter code: Agamous-like MADS-box protein AGL1 (248 aa).

The region spanning 18-72 (RGKIEIKRIENTTNRQVTFCKRRNGLLKKAYELSVLCDAEVALVIFSTRGRLYEY) is the MADS-box domain. The 91-residue stretch at 102-192 (TQYYQQEASK…RAKIAEGARL (91 aa)) folds into the K-box domain.

As to quaternary structure, interacts with AGL15 and AGL16.

The protein resides in the nucleus. Its function is as follows. Probable transcription factor. Interacts genetically with TT16/AGL32 in a partially antagonistic manner during flower development. Is essential for the coordination of cell divisions in ovule, seed coat development and endosperm formation. The protein is Agamous-like MADS-box protein AGL1 (AGL1) of Arabidopsis thaliana (Mouse-ear cress).